A 269-amino-acid polypeptide reads, in one-letter code: Glutamate racemase (269 aa).

Substrate is bound by residues 7–8 and 39–40; these read DS and YG. The active-site Proton donor/acceptor is C70. 71–72 provides a ligand contact to substrate; sequence NT. C194 functions as the Proton donor/acceptor in the catalytic mechanism. Substrate is bound at residue 195-196; it reads TH.

Belongs to the aspartate/glutamate racemases family.

It carries out the reaction L-glutamate = D-glutamate. Its pathway is cell wall biogenesis; peptidoglycan biosynthesis. Its function is as follows. Provides the (R)-glutamate required for cell wall biosynthesis. This Roseobacter denitrificans (strain ATCC 33942 / OCh 114) (Erythrobacter sp. (strain OCh 114)) protein is Glutamate racemase.